Consider the following 154-residue polypeptide: Lipoprotein signal peptidase (154 aa).

2 helical membrane passes run 55 to 75 (GQFW…VIYI) and 85 to 105 (AGVG…DRVF). Active-site residues include D111 and D129. Residues 127–147 (VADSALTVGVILLFVHMFFFA) form a helical membrane-spanning segment.

This sequence belongs to the peptidase A8 family.

Its subcellular location is the cell membrane. It carries out the reaction Release of signal peptides from bacterial membrane prolipoproteins. Hydrolyzes -Xaa-Yaa-Zaa-|-(S,diacylglyceryl)Cys-, in which Xaa is hydrophobic (preferably Leu), and Yaa (Ala or Ser) and Zaa (Gly or Ala) have small, neutral side chains.. It participates in protein modification; lipoprotein biosynthesis (signal peptide cleavage). This protein specifically catalyzes the removal of signal peptides from prolipoproteins. This chain is Lipoprotein signal peptidase, found in Geobacillus kaustophilus (strain HTA426).